Reading from the N-terminus, the 366-residue chain is Alanine racemase (366 aa).

Residue Lys33 is the Proton acceptor; specific for D-alanine of the active site. At Lys33 the chain carries N6-(pyridoxal phosphate)lysine. Arg129 lines the substrate pocket. Tyr253 (proton acceptor; specific for L-alanine) is an active-site residue. Met301 contributes to the substrate binding site.

The protein belongs to the alanine racemase family. The cofactor is pyridoxal 5'-phosphate.

The enzyme catalyses L-alanine = D-alanine. It participates in amino-acid biosynthesis; D-alanine biosynthesis; D-alanine from L-alanine: step 1/1. Catalyzes the interconversion of L-alanine and D-alanine. May also act on other amino acids. This is Alanine racemase (alr) from Xanthomonas oryzae pv. oryzae (strain KACC10331 / KXO85).